A 191-amino-acid chain; its full sequence is MADGEVHKLRDIIEKELLEARRVFFSEPVTEKSASDAIKKLWYLELKDPGKPIVFVINSPGGSVDAGFAVWDQIKMLTSPVTTVVTGLAASMGSVLSLCAAPGRRFATPHSRIMIHQPSIGGPITGQATDLDIHAREILKTKARIIDVYVEATNQPRDIIEKAIDRDMWMTANEAKDFGLLDGILFSFNDL.

Residue Ser-91 is the Nucleophile of the active site. His-116 is an active-site residue.

Belongs to the peptidase S14 family. As to quaternary structure, fourteen ClpP subunits assemble into 2 heptameric rings which stack back to back to give a disk-like structure with a central cavity, resembling the structure of eukaryotic proteasomes.

It is found in the cytoplasm. The catalysed reaction is Hydrolysis of proteins to small peptides in the presence of ATP and magnesium. alpha-casein is the usual test substrate. In the absence of ATP, only oligopeptides shorter than five residues are hydrolyzed (such as succinyl-Leu-Tyr-|-NHMec, and Leu-Tyr-Leu-|-Tyr-Trp, in which cleavage of the -Tyr-|-Leu- and -Tyr-|-Trp bonds also occurs).. Cleaves peptides in various proteins in a process that requires ATP hydrolysis. Has a chymotrypsin-like activity. Plays a major role in the degradation of misfolded proteins. This chain is ATP-dependent Clp protease proteolytic subunit 1, found in Chlamydia pneumoniae (Chlamydophila pneumoniae).